We begin with the raw amino-acid sequence, 101 residues long: Small ribosomal subunit protein uS14 (101 aa).

It belongs to the universal ribosomal protein uS14 family. As to quaternary structure, part of the 30S ribosomal subunit. Contacts proteins S3 and S10.

Its function is as follows. Binds 16S rRNA, required for the assembly of 30S particles and may also be responsible for determining the conformation of the 16S rRNA at the A site. This chain is Small ribosomal subunit protein uS14, found in Aliivibrio salmonicida (strain LFI1238) (Vibrio salmonicida (strain LFI1238)).